A 391-amino-acid polypeptide reads, in one-letter code: MVAAKTIKSLVDKADLPDNIKEELYNKLIEYNKKYKFKKAEVEAIIEETVKEYQNSLVEPGEAIGTVAAQSIGEPSTQMTLNTFHYAGVAEINVTLGLPRIIEIVDARKNPSTPIMTVYLDEKHRYDREKALEVARRIEGTTLENLAREMSIDILNFEFIVEIDPERLEKSGLDMEKIQKKLESSFKSAEFEVDGYTLIMRPKKVTKLSDLRRLSEKVKKHRLKGLSGVGKTIIRKEGDEYVIYTEGSNFKQILKVPGVDPTRTRTNNIHEIAEVLGIEAARNAIIEEIVNTMRDQGLEVDVRHIMLVADMMTLDGVILPIGRHGIVGEKASVLARAAFEITTQHLFEAAERGETDPLNGVVENVLIGQPVPVGTGIVKLAMNLPLRPKRE.

It belongs to the RNA polymerase beta' chain family. Part of the RNA polymerase complex.

It localises to the cytoplasm. The enzyme catalyses RNA(n) + a ribonucleoside 5'-triphosphate = RNA(n+1) + diphosphate. Its function is as follows. DNA-dependent RNA polymerase (RNAP) catalyzes the transcription of DNA into RNA using the four ribonucleoside triphosphates as substrates. Forms part of the jaw domain. This chain is DNA-directed RNA polymerase subunit Rpo1C, found in Thermococcus onnurineus (strain NA1).